We begin with the raw amino-acid sequence, 68 residues long: DNA-directed RNA polymerase subunit omega (68 aa).

This sequence belongs to the RNA polymerase subunit omega family. The RNAP catalytic core consists of 2 alpha, 1 beta, 1 beta' and 1 omega subunit. When a sigma factor is associated with the core the holoenzyme is formed, which can initiate transcription.

It catalyses the reaction RNA(n) + a ribonucleoside 5'-triphosphate = RNA(n+1) + diphosphate. In terms of biological role, promotes RNA polymerase assembly. Latches the N- and C-terminal regions of the beta' subunit thereby facilitating its interaction with the beta and alpha subunits. This is DNA-directed RNA polymerase subunit omega from Syntrophotalea carbinolica (strain DSM 2380 / NBRC 103641 / GraBd1) (Pelobacter carbinolicus).